The sequence spans 466 residues: Glutamate--tRNA ligase 2 (466 aa).

The 'HIGH' region signature appears at 9–19 (PSPTGYLHVGG). A 'KMSKS' region motif is present at residues 234-238 (PLSKR). Residue K237 participates in ATP binding.

It belongs to the class-I aminoacyl-tRNA synthetase family. Glutamate--tRNA ligase type 1 subfamily. As to quaternary structure, monomer.

The protein localises to the cytoplasm. It carries out the reaction tRNA(Glu) + L-glutamate + ATP = L-glutamyl-tRNA(Glu) + AMP + diphosphate. Catalyzes the attachment of glutamate to tRNA(Glu) in a two-step reaction: glutamate is first activated by ATP to form Glu-AMP and then transferred to the acceptor end of tRNA(Glu). The chain is Glutamate--tRNA ligase 2 from Pseudothermotoga lettingae (strain ATCC BAA-301 / DSM 14385 / NBRC 107922 / TMO) (Thermotoga lettingae).